Here is a 562-residue protein sequence, read N- to C-terminus: Dihydroxy-acid dehydratase (562 aa).

Residue Asp80 coordinates Mg(2+). Cys121 serves as a coordination point for [2Fe-2S] cluster. The Mg(2+) site is built by Asp122 and Lys123. N6-carboxylysine is present on Lys123. Cys194 is a [2Fe-2S] cluster binding site. Glu446 lines the Mg(2+) pocket. Ser472 serves as the catalytic Proton acceptor.

This sequence belongs to the IlvD/Edd family. Homodimer. The cofactor is [2Fe-2S] cluster. Mg(2+) serves as cofactor.

The catalysed reaction is (2R)-2,3-dihydroxy-3-methylbutanoate = 3-methyl-2-oxobutanoate + H2O. It catalyses the reaction (2R,3R)-2,3-dihydroxy-3-methylpentanoate = (S)-3-methyl-2-oxopentanoate + H2O. The protein operates within amino-acid biosynthesis; L-isoleucine biosynthesis; L-isoleucine from 2-oxobutanoate: step 3/4. It participates in amino-acid biosynthesis; L-valine biosynthesis; L-valine from pyruvate: step 3/4. Its function is as follows. Functions in the biosynthesis of branched-chain amino acids. Catalyzes the dehydration of (2R,3R)-2,3-dihydroxy-3-methylpentanoate (2,3-dihydroxy-3-methylvalerate) into 2-oxo-3-methylpentanoate (2-oxo-3-methylvalerate) and of (2R)-2,3-dihydroxy-3-methylbutanoate (2,3-dihydroxyisovalerate) into 2-oxo-3-methylbutanoate (2-oxoisovalerate), the penultimate precursor to L-isoleucine and L-valine, respectively. This is Dihydroxy-acid dehydratase from Macrococcus caseolyticus (strain JCSC5402) (Macrococcoides caseolyticum).